We begin with the raw amino-acid sequence, 177 residues long: Cytochrome c-type biogenesis protein CcmE (177 aa).

Residues 1–7 (MTRKSRR) are Cytoplasmic-facing. The helical; Signal-anchor for type II membrane protein transmembrane segment at 8–28 (LILIAACGAVLALALGLILSA) threads the bilayer. The Periplasmic segment spans residues 29–177 (MSGSIVFFRS…DATLGQRSER (149 aa)). Heme-binding residues include H122 and Y126. Positions 133–177 (DALKAQGRWQEGGSKEAPKDASKAAPKDAAKPETADATLGQRSER) are disordered. Positions 145–166 (GSKEAPKDASKAAPKDAAKPET) are enriched in basic and acidic residues.

This sequence belongs to the CcmE/CycJ family.

The protein resides in the cell inner membrane. Heme chaperone required for the biogenesis of c-type cytochromes. Transiently binds heme delivered by CcmC and transfers the heme to apo-cytochromes in a process facilitated by CcmF and CcmH. In Methylorubrum extorquens (strain PA1) (Methylobacterium extorquens), this protein is Cytochrome c-type biogenesis protein CcmE.